The sequence spans 224 residues: UPF0758 protein PSPPH_0210 (224 aa).

An MPN domain is found at 102 to 224 (ALENPTQVRN…PLSMVERGLM (123 aa)). The Zn(2+) site is built by histidine 173, histidine 175, and aspartate 186. The JAMM motif motif lies at 173-186 (HNHPSGITTPSRSD).

It belongs to the UPF0758 family.

The chain is UPF0758 protein PSPPH_0210 from Pseudomonas savastanoi pv. phaseolicola (strain 1448A / Race 6) (Pseudomonas syringae pv. phaseolicola (strain 1448A / Race 6)).